Reading from the N-terminus, the 853-residue chain is Putative dipeptidyl aminopeptidase C14C4.15c (853 aa).

The tract at residues 1 to 26 (MNAYEGDTLNNHGKSSTRQHWRKRSA) is disordered. The Cytoplasmic portion of the chain corresponds to 1 to 65 (MNAYEGDTLN…AKKRRRKKHR (65 aa)). A compositionally biased stretch (basic residues) spans 15–25 (SSTRQHWRKRS). The chain crosses the membrane as a helical; Signal-anchor for type II membrane protein span at residues 66–86 (YIYLAVCLFFLASVLSCAIIF). The Lumenal segment spans residues 87–853 (RFYLHTNREN…SGHFHHALYC (767 aa)). N-linked (GlcNAc...) asparagine glycosylation is found at asparagine 96, asparagine 102, asparagine 472, asparagine 483, and asparagine 613. Active-site charge relay system residues include serine 719, aspartate 795, and histidine 828.

Belongs to the peptidase S9B family.

It is found in the vacuole membrane. The protein is Putative dipeptidyl aminopeptidase C14C4.15c of Schizosaccharomyces pombe (strain 972 / ATCC 24843) (Fission yeast).